Reading from the N-terminus, the 134-residue chain is Cytochrome b (134 aa).

The next 3 helical transmembrane spans lie at 33-53, 77-98, and 113-133; these read FGSLLGVCLATQILTGLFLAM, WILRYLHANGASMFFICLFLHV, and WNIGIILLFAVMATAFMGYVL. Heme b contacts are provided by H83 and H97.

This sequence belongs to the cytochrome b family. The cytochrome bc1 complex contains 11 subunits: 3 respiratory subunits (MT-CYB, CYC1 and UQCRFS1), 2 core proteins (UQCRC1 and UQCRC2) and 6 low-molecular weight proteins (UQCRH/QCR6, UQCRB/QCR7, UQCRQ/QCR8, UQCR10/QCR9, UQCR11/QCR10 and a cleavage product of UQCRFS1). This cytochrome bc1 complex then forms a dimer. Requires heme b as cofactor.

It is found in the mitochondrion inner membrane. Component of the ubiquinol-cytochrome c reductase complex (complex III or cytochrome b-c1 complex) that is part of the mitochondrial respiratory chain. The b-c1 complex mediates electron transfer from ubiquinol to cytochrome c. Contributes to the generation of a proton gradient across the mitochondrial membrane that is then used for ATP synthesis. This chain is Cytochrome b (MT-CYB), found in Rhinolophus hipposideros (Lesser horseshoe bat).